The chain runs to 411 residues: Intracellular hyaluronan-binding protein 4 (411 aa).

Phosphoserine is present on residues S7 and S36. Positions 42–62 form a coiled coil; that stretch reads LREAEHRRQQQLQRKRRDEAA. The disordered stretch occupies residues 42-271; that stretch reads LREAEHRRQQ…ECQGTLDEES (230 aa). At R70 the chain carries Omega-N-methylarginine. S74 is subject to Phosphoserine. A compositionally biased stretch (basic and acidic residues) spans 87-97; sequence GRRESQKERKS. Residue S108 is modified to Phosphoserine. Composition is skewed to basic and acidic residues over residues 138–181 and 205–229; these read VLER…DRPL and DSFD…RMED. Glycyl lysine isopeptide (Lys-Gly) (interchain with G-Cter in SUMO1); alternate cross-links involve residues K212 and K274. Glycyl lysine isopeptide (Lys-Gly) (interchain with G-Cter in SUMO2); alternate cross-links involve residues K212 and K274. The stretch at 279 to 301 forms a coiled coil; it reads EVEEENQVQEMTLDEWKNLQEQT. Over residues 296–313 the composition is skewed to basic and acidic residues; the sequence is NLQEQTRPKPEFNIRKPE. The disordered stretch occupies residues 296 to 318; sequence NLQEQTRPKPEFNIRKPESTVPS. A Glycyl lysine isopeptide (Lys-Gly) (interchain with G-Cter in SUMO1); alternate cross-link involves residue K334. K334 is covalently cross-linked (Glycyl lysine isopeptide (Lys-Gly) (interchain with G-Cter in SUMO2); alternate). T352 and T373 each carry phosphothreonine; by PKC. Residues 358-411 form a disordered region; sequence NFGNLPRPGRGARGSTRGGRGRMRRTENYGPRAEVVTQDVAPNPDDPEDFPALA. Residues 402 to 411 show a composition bias toward acidic residues; sequence DDPEDFPALA.

This sequence belongs to the SERBP1-HABP4 family. As to quaternary structure, associates with ribosomes; promoting ribosome stabilization. Interacts with EEF2/eEF2; promoting ribosome stabilization. Interacts with FMR1. Interacts with FXR1 and FXR2. Interacts with CHD3 (via C-terminus). Interacts (via C-terminus) with RACK1. Interacts with p53/TP53. Interacts (via N-terminus) with SRSF9; this interaction is direct. Interacts with SYNCRIP; this interaction is direct. Interacts with MEF2C (via N-terminus); this interaction decreases DNA-binding activity of MEF2C in myocardial cells in response to mechanical stress. Interacts with PRMT1 (via N-terminus). Interacts with SPIN1. Phosphorylated by phorbol 12-myristate 13-acetate (PMA)-activated PKC isoforms at Thr-352 and Thr-373. In terms of processing, methylated. Methylation is decreased by phorbol 12-myristate 13-acetate (PMA)-activated PKC, in vitro. As to expression, expressed in adult heart, brain, liver, kidney, testis, and in various embryonic tissues, but not in adult spleen, lung or skeletal muscle.

It is found in the nucleus. The protein resides in the cytoplasm. Its subcellular location is the stress granule. It localises to the sarcoplasm. The protein localises to the nuclear body. It is found in the nucleolus. The protein resides in the nucleus speckle. Its subcellular location is the cajal body. It localises to the gem. Ribosome-binding protein that promotes ribosome hibernation, a process during which ribosomes are stabilized in an inactive state and preserved from proteasomal degradation. Acts via its association with EEF2/eEF2 factor at the A-site of the ribosome, promoting ribosome stabilization in an inactive state compatible with storage. Plays a key role in ribosome hibernation in the mature oocyte by promoting ribosome stabilization. Ribosomes, which are produced in large quantities during oogenesis, are stored and translationally repressed in the oocyte and early embryo. Also binds RNA, regulating transcription and pre-mRNA splicing. Binds (via C-terminus) to poly(U) RNA. Seems to play a role in PML-nuclear bodies formation. Negatively regulates DNA-binding activity of the transcription factor MEF2C in myocardial cells in response to mechanical stress. The sequence is that of Intracellular hyaluronan-binding protein 4 from Mus musculus (Mouse).